Here is a 469-residue protein sequence, read N- to C-terminus: UDP-N-acetylmuramate--L-alanine ligase (469 aa).

An ATP-binding site is contributed by Gly-113–Thr-119.

Belongs to the MurCDEF family.

Its subcellular location is the cytoplasm. The enzyme catalyses UDP-N-acetyl-alpha-D-muramate + L-alanine + ATP = UDP-N-acetyl-alpha-D-muramoyl-L-alanine + ADP + phosphate + H(+). It functions in the pathway cell wall biogenesis; peptidoglycan biosynthesis. In terms of biological role, cell wall formation. This Neisseria meningitidis serogroup A / serotype 4A (strain DSM 15465 / Z2491) protein is UDP-N-acetylmuramate--L-alanine ligase.